The chain runs to 513 residues: GMP synthase [glutamine-hydrolyzing] (513 aa).

A Glutamine amidotransferase type-1 domain is found at Leu-5–Asp-195. Cys-82 acts as the Nucleophile in catalysis. Active-site residues include His-169 and Glu-171. Positions Trp-196–Arg-388 constitute a GMPS ATP-PPase domain. An ATP-binding site is contributed by Ser-223 to Ser-229.

In terms of assembly, homodimer.

It carries out the reaction XMP + L-glutamine + ATP + H2O = GMP + L-glutamate + AMP + diphosphate + 2 H(+). Its pathway is purine metabolism; GMP biosynthesis; GMP from XMP (L-Gln route): step 1/1. Its function is as follows. Catalyzes the synthesis of GMP from XMP. The chain is GMP synthase [glutamine-hydrolyzing] from Clostridium botulinum (strain Alaska E43 / Type E3).